A 273-amino-acid polypeptide reads, in one-letter code: GATA-type zinc finger protein 1 (273 aa).

Disordered regions lie at residues 99–143 and 172–201; these read RDSK…ERVD and SSRS…AGSE. The segment at 208 to 232 adopts a GATA-type zinc-finger fold; the sequence is CASCRTQRTPLWRDAEDGTPLCNAC.

Its subcellular location is the nucleus. Functionally, transcriptional regulator that plays a key role in germ cell development. Determines the oogenic fate by activating key genes for the oogenic program and meiotic prophase entry. Acts downstream of bone morphogenetic protein (BMP) by regulating expression of genes required for the oogenic programs, which are repressed by Polycomb activities in sexually uncommitted germ cells. Regulates expression of STRA8, a central downstream effector for the meiotic program. Acts independently of retinoic acid (RA). In males, not required for germ-cell sex determination, but required to allow the spermatogonia to efficiently accomplish the meiotic prophase. The chain is GATA-type zinc finger protein 1 from Homo sapiens (Human).